The chain runs to 115 residues: Large ribosomal subunit protein uL22 (115 aa).

This sequence belongs to the universal ribosomal protein uL22 family. Part of the 50S ribosomal subunit.

This protein binds specifically to 23S rRNA; its binding is stimulated by other ribosomal proteins, e.g. L4, L17, and L20. It is important during the early stages of 50S assembly. It makes multiple contacts with different domains of the 23S rRNA in the assembled 50S subunit and ribosome. In terms of biological role, the globular domain of the protein is located near the polypeptide exit tunnel on the outside of the subunit, while an extended beta-hairpin is found that lines the wall of the exit tunnel in the center of the 70S ribosome. This is Large ribosomal subunit protein uL22 from Enterococcus faecalis (strain ATCC 700802 / V583).